The sequence spans 183 residues: Acireductone dioxygenase (183 aa).

The disordered stretch occupies residues 1–21 (MVQAWYMDSDTTTDQREEHQL). His90, His92, Glu96, and His135 together coordinate Fe(2+). Residues His90, His92, Glu96, and His135 each coordinate Ni(2+).

The protein belongs to the acireductone dioxygenase (ARD) family. It depends on Fe(2+) as a cofactor. Requires Ni(2+) as cofactor.

The protein resides in the cytoplasm. It localises to the nucleus. It catalyses the reaction 1,2-dihydroxy-5-(methylsulfanyl)pent-1-en-3-one + O2 = 4-methylsulfanyl-2-oxobutanoate + formate + 2 H(+). It carries out the reaction 1,2-dihydroxy-5-(methylsulfanyl)pent-1-en-3-one + O2 = 3-(methylsulfanyl)propanoate + CO + formate + 2 H(+). Its pathway is amino-acid biosynthesis; L-methionine biosynthesis via salvage pathway; L-methionine from S-methyl-5-thio-alpha-D-ribose 1-phosphate: step 5/6. In terms of biological role, catalyzes 2 different reactions between oxygen and the acireductone 1,2-dihydroxy-3-keto-5-methylthiopentene (DHK-MTPene) depending upon the metal bound in the active site. Fe-containing acireductone dioxygenase (Fe-ARD) produces formate and 2-keto-4-methylthiobutyrate (KMTB), the alpha-ketoacid precursor of methionine in the methionine recycle pathway. Ni-containing acireductone dioxygenase (Ni-ARD) produces methylthiopropionate, carbon monoxide and formate, and does not lie on the methionine recycle pathway. The sequence is that of Acireductone dioxygenase from Ixodes scapularis (Black-legged tick).